Consider the following 101-residue polypeptide: Enhancer of yellow 2 transcription factor (101 aa).

Belongs to the ENY2 family. Component of the nuclear pore complex (NPC)-associated TREX-2/AMEX complex (anchoring and mRNA export complex), composed of e(y)2, xmas and PCID2. Within the TREX-2/ AMEX complex, interactions with xmas is required for localization to the nuclear periphery. Component of the SAGA transcription coactivator-HAT complexes, at least composed of Ada2b, e(y)2, Pcaf/Gcn5, Taf10 and Nipped-A/Trrap. Within the SAGA complex, e(y)2, Sgf11, and not/nonstop form an additional subcomplex of SAGA called the DUB module (deubiquitination module). Component of the THO complex, composed of at least e(y)2, HPR1, THO2, THOC5, THOC6 and THOC7. Interacts with Taf9. Interacts with su(Hw) (via zinc fingers). Interacts with the nuclear pore complex (NPC). Interaction between the TREX-2/AMEX complex and the ORC complex is required for ORC localization to mRNPs, and consequently mRNA export. Within the TREX-2/AMEX-ORC complex, interacts with Orc6 and (via N-terminus or C-terminus) with Orc3. Interacts with the zinc finger protein CG9890. In terms of tissue distribution, ubiquitous.

The protein resides in the nucleus. It is found in the nucleoplasm. The protein localises to the cytoplasm. Its subcellular location is the nucleus membrane. Involved in mRNA export coupled transcription activation by association with both the TREX-2/AMEX and the SAGA complexes. The SAGA complex is a multiprotein complex that activates transcription by remodeling chromatin and mediating histone acetylation and deubiquitination. Within the SAGA complex, participates in a subcomplex that specifically deubiquitinates histone H2B. The SAGA complex is recruited to specific gene promoters by activators, where it is required for transcription. Required for nuclear receptor-mediated transactivation. Involved in transcription elongation by recruiting the THO complex onto nascent mRNA. The TREX-2/AMEX complex functions in docking export-competent ribonucleoprotein particles (mRNPs) to the nuclear entrance of the nuclear pore complex (nuclear basket). TREX-2/AMEX participates in mRNA export and accurate chromatin positioning in the nucleus by tethering genes to the nuclear periphery. Recruited to the su(Hw) insulators via its interaction with su(Hw) and participates in the barrier activity of such insulators. In contrast, it does not participate in the enhancer-blocking activity of the su(Hw) insulators. The polypeptide is Enhancer of yellow 2 transcription factor (Drosophila melanogaster (Fruit fly)).